The sequence spans 745 residues: Elongation factor G, mitochondrial (745 aa).

The region spanning 40–317 (EKIRNIGISA…AVLDYLPNPG (278 aa)) is the tr-type G domain. Residues 49-56 (AHIDSGKT), 116-120 (DTPGH), and 170-173 (NKLD) contribute to the GTP site.

Belongs to the TRAFAC class translation factor GTPase superfamily. Classic translation factor GTPase family. EF-G/EF-2 subfamily.

It is found in the mitochondrion. It participates in protein biosynthesis; polypeptide chain elongation. In terms of biological role, mitochondrial GTPase that catalyzes the GTP-dependent ribosomal translocation step during translation elongation. During this step, the ribosome changes from the pre-translocational (PRE) to the post-translocational (POST) state as the newly formed A-site-bound peptidyl-tRNA and P-site-bound deacylated tRNA move to the P and E sites, respectively. Catalyzes the coordinated movement of the two tRNA molecules, the mRNA and conformational changes in the ribosome. Essential during development as it acts as a retrograde signal from mitochondria to the nucleus to slow down cell proliferation if mitochondrial energy output is low. The chain is Elongation factor G, mitochondrial from Drosophila willistoni (Fruit fly).